The chain runs to 1367 residues: Probable serine/threonine-protein kinase pkgA (1367 aa).

Disordered regions lie at residues 140-164 (IDEN…NKTI), 264-429 (KNGK…LLSR), 456-556 (PTPL…SRKP), and 771-792 (PREE…SDPV). The span at 143 to 162 (NNNNNNNNNNNNNNNNNKNK) shows a compositional bias: low complexity. The span at 271–282 (IKRPSPPLPPPQ) shows a compositional bias: pro residues. The segment covering 287 to 326 (EQQKEQKEQQKEQQKEQQKEQQKEQEQKQQEPQKYVKFEI) has biased composition (basic and acidic residues). A compositionally biased stretch (low complexity) spans 340 to 381 (ISSSNISNEISKQQQQQQQQQQQQQQQQQQQQQQQQQQQQQQ). The span at 399–421 (ANNNILTTPLSSQPTQSLETPST) shows a compositional bias: polar residues. Residues 506-517 (GEDEEEDEDDDN) show a composition bias toward acidic residues. The span at 531–544 (LKNKRPFKKTHVHH) shows a compositional bias: basic residues. The 427-residue stretch at 810-1236 (FEFIKPITKG…AEEIKSHPFF (427 aa)) folds into the Protein kinase domain. Residues 816–824 (ITKGGYGKV) and Lys-839 each bind ATP. Asp-933 serves as the catalytic Proton acceptor. Disordered regions lie at residues 971-1034 (FSPT…PSNT), 1084-1134 (FIPP…HNIH), and 1288-1312 (QNQN…TATA). Over residues 979-1015 (NNQSSSSSSVSNIGGSNTIGSNISSTNNNNNNNNTTG) the composition is skewed to low complexity. The segment covering 1025-1034 (NTETPIPSNT) has biased composition (polar residues). Composition is skewed to low complexity over residues 1092–1125 (QQPI…QQTT) and 1294–1312 (SSTI…TATA). The region spanning 1237–1347 (KSINWKTILT…VNFQSLLELN (111 aa)) is the AGC-kinase C-terminal domain.

It belongs to the protein kinase superfamily. AGC Ser/Thr protein kinase family.

It catalyses the reaction L-seryl-[protein] + ATP = O-phospho-L-seryl-[protein] + ADP + H(+). The enzyme catalyses L-threonyl-[protein] + ATP = O-phospho-L-threonyl-[protein] + ADP + H(+). This Dictyostelium discoideum (Social amoeba) protein is Probable serine/threonine-protein kinase pkgA (pkgA).